Consider the following 692-residue polypeptide: Elongation factor G (692 aa).

Residues 8–283 enclose the tr-type G domain; it reads EDYRNFGIMA…AVVDYLPSPV (276 aa). GTP contacts are provided by residues 17–24, 81–85, and 135–138; these read AHIDAGKT, DTPGH, and NKMD.

The protein belongs to the TRAFAC class translation factor GTPase superfamily. Classic translation factor GTPase family. EF-G/EF-2 subfamily.

It is found in the cytoplasm. Catalyzes the GTP-dependent ribosomal translocation step during translation elongation. During this step, the ribosome changes from the pre-translocational (PRE) to the post-translocational (POST) state as the newly formed A-site-bound peptidyl-tRNA and P-site-bound deacylated tRNA move to the P and E sites, respectively. Catalyzes the coordinated movement of the two tRNA molecules, the mRNA and conformational changes in the ribosome. This Caulobacter vibrioides (strain ATCC 19089 / CIP 103742 / CB 15) (Caulobacter crescentus) protein is Elongation factor G.